The following is a 204-amino-acid chain: Recombination protein RecR (204 aa).

The C4-type zinc-finger motif lies at 58 to 75 (CSICQNVTDRDADPCRIC). The 99-residue stretch at 83–181 (SVICVVESPV…MVTKIARGIP (99 aa)) folds into the Toprim domain.

It belongs to the RecR family.

May play a role in DNA repair. It seems to be involved in an RecBC-independent recombinational process of DNA repair. It may act with RecF and RecO. The chain is Recombination protein RecR from Chlorobium phaeovibrioides (strain DSM 265 / 1930) (Prosthecochloris vibrioformis (strain DSM 265)).